A 283-amino-acid chain; its full sequence is Phosphatidylserine decarboxylase proenzyme (283 aa).

Catalysis depends on charge relay system; for autoendoproteolytic cleavage activity residues Asp89, His146, and Ser249. The active-site Schiff-base intermediate with substrate; via pyruvic acid; for decarboxylase activity is Ser249. Ser249 is modified (pyruvic acid (Ser); by autocatalysis).

Belongs to the phosphatidylserine decarboxylase family. PSD-B subfamily. Prokaryotic type I sub-subfamily. In terms of assembly, heterodimer of a large membrane-associated beta subunit and a small pyruvoyl-containing alpha subunit. It depends on pyruvate as a cofactor. In terms of processing, is synthesized initially as an inactive proenzyme. Formation of the active enzyme involves a self-maturation process in which the active site pyruvoyl group is generated from an internal serine residue via an autocatalytic post-translational modification. Two non-identical subunits are generated from the proenzyme in this reaction, and the pyruvate is formed at the N-terminus of the alpha chain, which is derived from the carboxyl end of the proenzyme. The autoendoproteolytic cleavage occurs by a canonical serine protease mechanism, in which the side chain hydroxyl group of the serine supplies its oxygen atom to form the C-terminus of the beta chain, while the remainder of the serine residue undergoes an oxidative deamination to produce ammonia and the pyruvoyl prosthetic group on the alpha chain. During this reaction, the Ser that is part of the protease active site of the proenzyme becomes the pyruvoyl prosthetic group, which constitutes an essential element of the active site of the mature decarboxylase.

The protein resides in the cell membrane. The catalysed reaction is a 1,2-diacyl-sn-glycero-3-phospho-L-serine + H(+) = a 1,2-diacyl-sn-glycero-3-phosphoethanolamine + CO2. The protein operates within phospholipid metabolism; phosphatidylethanolamine biosynthesis; phosphatidylethanolamine from CDP-diacylglycerol: step 2/2. Catalyzes the formation of phosphatidylethanolamine (PtdEtn) from phosphatidylserine (PtdSer). The chain is Phosphatidylserine decarboxylase proenzyme from Legionella pneumophila subsp. pneumophila (strain Philadelphia 1 / ATCC 33152 / DSM 7513).